We begin with the raw amino-acid sequence, 440 residues long: Thymidine phosphorylase (440 aa).

It belongs to the thymidine/pyrimidine-nucleoside phosphorylase family. As to quaternary structure, homodimer.

It catalyses the reaction thymidine + phosphate = 2-deoxy-alpha-D-ribose 1-phosphate + thymine. Its pathway is pyrimidine metabolism; dTMP biosynthesis via salvage pathway; dTMP from thymine: step 1/2. Functionally, the enzymes which catalyze the reversible phosphorolysis of pyrimidine nucleosides are involved in the degradation of these compounds and in their utilization as carbon and energy sources, or in the rescue of pyrimidine bases for nucleotide synthesis. The protein is Thymidine phosphorylase of Rhizobium meliloti (strain 1021) (Ensifer meliloti).